Consider the following 372-residue polypeptide: 4-hydroxy-3-methylbut-2-en-1-yl diphosphate synthase (flavodoxin) (372 aa).

C270, C273, C305, and E312 together coordinate [4Fe-4S] cluster.

It belongs to the IspG family. The cofactor is [4Fe-4S] cluster.

The enzyme catalyses (2E)-4-hydroxy-3-methylbut-2-enyl diphosphate + oxidized [flavodoxin] + H2O + 2 H(+) = 2-C-methyl-D-erythritol 2,4-cyclic diphosphate + reduced [flavodoxin]. The protein operates within isoprenoid biosynthesis; isopentenyl diphosphate biosynthesis via DXP pathway; isopentenyl diphosphate from 1-deoxy-D-xylulose 5-phosphate: step 5/6. Converts 2C-methyl-D-erythritol 2,4-cyclodiphosphate (ME-2,4cPP) into 1-hydroxy-2-methyl-2-(E)-butenyl 4-diphosphate. The chain is 4-hydroxy-3-methylbut-2-en-1-yl diphosphate synthase (flavodoxin) from Escherichia coli O9:H4 (strain HS).